Here is a 323-residue protein sequence, read N- to C-terminus: MGNSAAREDFEWVYTDQPHADRRKEILAKYPEIKSLMKPDHNLIWIVSLMVLTQLVAFYLVKDLDWKWLLFWTYVVGSCISHSMTLAIHEISHNSAFGNSKAMWNRCFGMFANLPLGLPYSVSFKRYHMDHHRYLGGDGVDVDIPTDFEGWFFCTPLRKLVWIILQPLFYTIRPLCINPKPITRLEIINLVVQFSFDALIYYTLGGKALFYMLVGSILGLGLHPISGHFIAEHYMFLKGHETYSYYGPLNYLTFNVGYHNEHHDFPSVPGKNLPLVRKIAAEYYDPLPKYSSWVKVLYDFVMDDTLSPYSRMKRKLKGDLKLE.

The next 2 membrane-spanning stretches (helical) occupy residues 41 to 61 (HNLIWIVSLMVLTQLVAFYLV) and 68 to 88 (WLLFWTYVVGSCISHSMTLAI). The Histidine box-1 motif lies at 89 to 93 (HEISH). The helical transmembrane segment at 104 to 124 (WNRCFGMFANLPLGLPYSVSF) threads the bilayer. The short motif at 128-132 (HMDHH) is the Histidine box-2 element. A run of 3 helical transmembrane segments spans residues 152-172 (FFCTPLRKLVWIILQPLFYTI), 185-205 (LEIINLVVQFSFDALIYYTLG), and 210-230 (FYMLVGSILGLGLHPISGHFI). The Histidine box-3 signature appears at 259 to 263 (HNEHH).

It belongs to the fatty acid desaturase type 1 family. DEGS subfamily. As to quaternary structure, interacts with RLBP1; the interaction increases synthesis of chromophore-precursors by DEGS1.

The protein localises to the endoplasmic reticulum membrane. The enzyme catalyses an N-acylsphinganine + 2 Fe(II)-[cytochrome b5] + O2 + 2 H(+) = an N-acylsphing-4-enine + 2 Fe(III)-[cytochrome b5] + 2 H2O. It carries out the reaction all-trans-retinol = 11-cis-retinol. It catalyses the reaction all-trans-retinol = 9-cis-retinol. The catalysed reaction is all-trans-retinol = 13-cis-retinol. The enzyme catalyses 11-cis-retinol = 13-cis-retinol. It carries out the reaction 11-cis-retinol = 9-cis-retinol. Its function is as follows. Has sphingolipid-delta-4-desaturase activity. Converts D-erythro-sphinganine to D-erythro-sphingosine (E-sphing-4-enine). Catalyzes the equilibrium isomerization of retinols. This chain is Sphingolipid delta(4)-desaturase DES1 (degs1), found in Xenopus tropicalis (Western clawed frog).